The primary structure comprises 271 residues: Integral membrane protein 2C (271 aa).

A Phosphothreonine modification is found at threonine 41. Residues 59 to 79 (VGGVCYLSMGMVVLLMGLVFA) form a helical; Signal-anchor for type II membrane protein membrane-spanning segment. The region spanning 140-234 (FGGGDPADII…LCSGKDTYRL (95 aa)) is the BRICHOS domain. Cysteine 167 and cysteine 226 form a disulfide bridge. The N-linked (GlcNAc...) asparagine glycan is linked to asparagine 173.

Belongs to the ITM2 family. As to quaternary structure, interacts with BACE1. Interacts with APP. Interacts with STMN2. Post-translationally, type I membrane-bound, as well as soluble, furin has a pre-eminent role in ITM2C proteolytic processing. PCSK7 and PCSK5 may also be involved although to a lesser extent. The soluble form of PCSK7 is incapable of processing ITM2C. Fails to undergo shedding by ADAM10 and intramembrane cleavage by SPPL2B.

It is found in the lysosome membrane. The protein localises to the cell membrane. Functionally, negative regulator of amyloid-beta peptide production. May inhibit the processing of APP by blocking its access to alpha- and beta-secretase. Binding to the beta-secretase-cleaved APP C-terminal fragment is negligible, suggesting that ITM2C is a poor gamma-secretase cleavage inhibitor. May play a role in TNF-induced cell death and neuronal differentiation. This chain is Integral membrane protein 2C (ITM2C), found in Bos taurus (Bovine).